The primary structure comprises 204 residues: Tic20 family protein Ycf60 (204 aa).

4 consecutive transmembrane segments (helical) span residues 5–25, 87–107, 133–153, and 159–179; these read LPSL…SFII, LMPL…IFFI, ILLF…PIEF, and GLMM…YSII.

The protein belongs to the Tic20 family.

Its subcellular location is the plastid. The protein resides in the chloroplast membrane. The polypeptide is Tic20 family protein Ycf60 (ycf60) (Gracilaria tenuistipitata var. liui (Red alga)).